Consider the following 507-residue polypeptide: Keratin, type II cuticular Hb5 (507 aa).

Residues 1 to 123 (MSCRSYRISS…PNAQCVKQEE (123 aa)) form a head region. One can recognise an IF rod domain in the interval 123–434 (EKEQIKSLNS…RLLEGEEHRL (312 aa)). Positions 124 to 158 (KEQIKSLNSRFAAFIDKVRFLEQQNKLLETKWQFY) are coil 1A. Residues 159–168 (QNQRCCESNL) are linker 1. The tract at residues 169–269 (EPLFSGYIET…YEEEIRVLQA (101 aa)) is coil 1B. Residue Lys229 forms a Glycyl lysine isopeptide (Lys-Gly) (interchain with G-Cter in SUMO1) linkage. Positions 270–286 (HISDTSVIVKMDNSRDL) are linker 12. Positions 287–430 (NMDCIIAEIK…ATYRRLLEGE (144 aa)) are coil 2. Positions 431-507 (EHRLCEGVGS…CGSSRSVRFA (77 aa)) are tail.

It belongs to the intermediate filament family. In terms of assembly, heterotetramer of two type I and two type II keratins. Synthesis occurs immediately above a small population of matrix cells at the base of the hair bulb and the trichocytes lining the dermal papilla and extends upward through the matrix and ends in the lower part of the cortex of the hair shaft.

The polypeptide is Keratin, type II cuticular Hb5 (KRT85) (Homo sapiens (Human)).